We begin with the raw amino-acid sequence, 320 residues long: Olfactory receptor 2W1 (320 aa).

Residues 1–25 (MDQSNYSSLHGFILLGFSNHPKMEM) are Extracellular-facing. An N-linked (GlcNAc...) asparagine glycan is attached at N5. Residues 26-49 (ILSGVVAIFYLITLVGNTAIILAS) traverse the membrane as a helical segment. Topologically, residues 50–57 (LLDSQLHT) are cytoplasmic. A helical transmembrane segment spans residues 58-79 (PMYFFLRNLSFLDLCFTTSIIP). Topologically, residues 80 to 100 (QMLVNLWGPDKTISYVGCIIQ) are extracellular. C97 and C189 are oxidised to a cystine. The helical transmembrane segment at 101-120 (LYVYMWLGSVECLLLAVMSY) threads the bilayer. The Cytoplasmic portion of the chain corresponds to 121–139 (DRFTAICKPLHYFVVMNPH). Residues 140–158 (LCLKMIIMIWSISLANSVV) form a helical membrane-spanning segment. Topologically, residues 159-195 (LCTLTLNLPTCGNNILDHFLCELPALVKIACVDTTTV) are extracellular. Residues 196–219 (EMSVFALGIIIVLTPLILILISYG) form a helical membrane-spanning segment. Over 220–236 (YIAKAVLRTKSKASQRK) the chain is Cytoplasmic. A helical membrane pass occupies residues 237 to 259 (AMNTCGSHLTVVSMFYGTIIYMY). The Extracellular segment spans residues 260–272 (LQPGNRASKDQGK). Residues 273–292 (FLTLFYTVITPSLNPLIYTL) traverse the membrane as a helical segment. Topologically, residues 293–320 (RNKDMKDALKKLMRFHHKSTKIKRNCKS) are cytoplasmic.

This sequence belongs to the G-protein coupled receptor 1 family.

Its subcellular location is the cell membrane. Functionally, odorant receptor. The sequence is that of Olfactory receptor 2W1 (OR2W1) from Homo sapiens (Human).